The sequence spans 235 residues: Urease accessory protein UreF (235 aa).

Belongs to the UreF family. UreD, UreF and UreG form a complex that acts as a GTP-hydrolysis-dependent molecular chaperone, activating the urease apoprotein by helping to assemble the nickel containing metallocenter of UreC. The UreE protein probably delivers the nickel.

Its subcellular location is the cytoplasm. Required for maturation of urease via the functional incorporation of the urease nickel metallocenter. This chain is Urease accessory protein UreF, found in Ureaplasma urealyticum serovar 10 (strain ATCC 33699 / Western).